The sequence spans 667 residues: Bicarbonate transport ATP-binding protein CmpC (667 aa).

An ABC transporter domain is found at 5-239; that stretch reads VAVDNIDKVF…RPRKRMEVVE (235 aa). 42 to 49 contacts ATP; it reads GHSGCGKS. Positions 281 to 667 are cmpA-like; the sequence is LELGYVPLVA…DNPTPAPVFA (387 aa).

This sequence belongs to the ABC transporter superfamily. Nitrate/nitrite/cyanate uptake transporter (NitT) (TC 3.A.1.16) family. The complex is composed of two ATP-binding proteins (CmpC and CmpD), a transmembrane protein (CmpB) and a solute-binding protein (CmpA).

Its subcellular location is the cell inner membrane. In terms of biological role, part of the ABC transporter complex CmpABCD involved in bicarbonate transport. Responsible for energy coupling to the transport system. The chain is Bicarbonate transport ATP-binding protein CmpC (cmpC) from Synechocystis sp. (strain ATCC 27184 / PCC 6803 / Kazusa).